The following is a 29-amino-acid chain: Neurotoxin BmK A3-6 (29 aa).

Contains 3 disulfide bonds. Expressed by the venom gland.

It localises to the secreted. The polypeptide is Neurotoxin BmK A3-6 (Olivierus martensii (Manchurian scorpion)).